We begin with the raw amino-acid sequence, 242 residues long: Small ribosomal subunit protein uS2 (242 aa).

It belongs to the universal ribosomal protein uS2 family.

This Shewanella piezotolerans (strain WP3 / JCM 13877) protein is Small ribosomal subunit protein uS2.